Consider the following 767-residue polypeptide: MTISPPERGSTAKSQVEKVDNPATFELFGKPGHFDRALAKGPKTTTWVWNLHANAHDFDSHTSDLEEVSRKIFSAHFGHLAVIFIWLSGAFFHGARFSNFSGWLADPTHVKPSAQVVWPVFGQEILNGDMGAGFQGIQITSGLFHVWRAWGITNETQLMSLAIGALVMAGLMLNAGVFHYHKAAPKLEWFQNVESMLNHHLAGLLGLGSLSWTGHLLHVSLPTTKLMDAIDAGQPLVLNGKTIASVADIPLPHEFFNQDLIAQLYPGFGAGIGAFFSGDWAAYSDFLTFKGGINPVTGSMWMSDIAHHHLAIAVLFIVAGHMYRTNWGIGHSIKEILEGQKGDPLLFPATKGHDGLFEFMTTSWHAQLGVNLAMLGSLSIIVAQHMYAMPPYPYMAIDYPTQIGLFTHHMWIGGFLIVGAAAHAAIAMIRDYDPAKHVDNVLDRVLKARDAIISHLNWVCIWLGAHSFGLYVHNDTMRALGRPQDMFSDSAISIQPVFAQWIQGIHAGAAGSTAPNALAGVSEVFNGSTIAVGGKVAAAAIPLGTADFMVHHIHAFTIHVTVLILLKGVLYARSSRLVPDKANLGFRFPCDGPGRGGTCQVSAWDHVFLGLFWMYNSLSVVIFHFSWKMQSDVWGTVNADGSVQHITNGNFANSAITINGWLRDFLWAQAAQVINSYGSNTSAYGLMFLGAHFVWAFSLMFLFSGRGYWQELIESIVWAHNKLKVAPAIQPRALSITQGRAVGVAHYLLGGIATTWAFFHAHILVVG.

Helical transmembrane passes span 72-95 (IFSA…FHGA), 158-181 (LMSL…FHYH), 197-221 (LNHH…HVSL), 305-323 (IAHH…GHMY), 364-387 (WHAQ…QHMY), 403-429 (IGLF…IAMI), 451-473 (AIIS…LYVH), and 548-566 (FMVH…LILL). [4Fe-4S] cluster is bound by residues Cys590 and Cys599. A run of 2 helical transmembrane segments spans residues 606-627 (HVFL…HFSW) and 681-703 (TSAY…MFLF). His692 is a binding site for chlorophyll a'. Residues Met700 and Tyr708 each coordinate chlorophyll a. Residue Trp709 coordinates phylloquinone. Residues 741–761 (AVGVAHYLLGGIATTWAFFHA) traverse the membrane as a helical segment.

This sequence belongs to the PsaA/PsaB family. The PsaA/B heterodimer binds the P700 chlorophyll special pair and subsequent electron acceptors. PSI consists of a core antenna complex that captures photons, and an electron transfer chain that converts photonic excitation into a charge separation. The cyanobacterial PSI reaction center is composed of one copy each of PsaA,B,C,D,E,F,I,J,K,L,M and X, and forms trimeric complexes. The cofactor is PSI electron transfer chain: 5 chlorophyll a, 1 chlorophyll a', 2 phylloquinones and 3 4Fe-4S clusters. PSI core antenna: 90 chlorophyll a, 22 carotenoids, 3 phospholipids and 1 galactolipid. P700 is a chlorophyll a/chlorophyll a' dimer, A0 is one or more chlorophyll a, A1 is one or both phylloquinones and FX is a shared 4Fe-4S iron-sulfur center..

The protein resides in the cellular thylakoid membrane. The catalysed reaction is reduced [plastocyanin] + hnu + oxidized [2Fe-2S]-[ferredoxin] = oxidized [plastocyanin] + reduced [2Fe-2S]-[ferredoxin]. Functionally, psaA and PsaB bind P700, the primary electron donor of photosystem I (PSI), as well as the electron acceptors A0, A1 and FX. PSI is a plastocyanin/cytochrome c6-ferredoxin oxidoreductase, converting photonic excitation into a charge separation, which transfers an electron from the donor P700 chlorophyll pair to the spectroscopically characterized acceptors A0, A1, FX, FA and FB in turn. Oxidized P700 is reduced on the lumenal side of the thylakoid membrane by plastocyanin or cytochrome c6. The polypeptide is Photosystem I P700 chlorophyll a apoprotein A1 (Synechococcus sp. (strain CC9311)).